Reading from the N-terminus, the 273-residue chain is Urease accessory protein UreD (273 aa).

The disordered stretch occupies residues 1–29 (MLMRTATPLDQPRAIGSARVSSKRVNGGS).

It belongs to the UreD family. As to quaternary structure, ureD, UreF and UreG form a complex that acts as a GTP-hydrolysis-dependent molecular chaperone, activating the urease apoprotein by helping to assemble the nickel containing metallocenter of UreC. The UreE protein probably delivers the nickel.

It localises to the cytoplasm. Functionally, required for maturation of urease via the functional incorporation of the urease nickel metallocenter. The polypeptide is Urease accessory protein UreD (Roseobacter denitrificans (strain ATCC 33942 / OCh 114) (Erythrobacter sp. (strain OCh 114))).